The following is a 138-amino-acid chain: MLQPSRRKFRKEQKGRNTGIATRGANVSFGDFGLKATERGRLTARQIEAARRAISRHVKRGGRIWIRIFPDKPISQKPAEVRMGNGKGNPEYYVAEIQPGKVLYEINGVPEELAREAFTLAAAKLPLRCTFVSRQIGA.

The span at 1 to 13 shows a compositional bias: basic residues; that stretch reads MLQPSRRKFRKEQ. The interval 1 to 22 is disordered; that stretch reads MLQPSRRKFRKEQKGRNTGIAT.

It belongs to the universal ribosomal protein uL16 family. Part of the 50S ribosomal subunit.

In terms of biological role, binds 23S rRNA and is also seen to make contacts with the A and possibly P site tRNAs. This Methylibium petroleiphilum (strain ATCC BAA-1232 / LMG 22953 / PM1) protein is Large ribosomal subunit protein uL16.